The following is a 126-amino-acid chain: Phosphoribosyl-AMP cyclohydrolase (126 aa).

Asp82 lines the Mg(2+) pocket. Position 83 (Cys83) interacts with Zn(2+). 2 residues coordinate Mg(2+): Asp84 and Asp86. Positions 99 and 106 each coordinate Zn(2+).

The protein belongs to the PRA-CH family. In terms of assembly, homodimer. Mg(2+) serves as cofactor. Zn(2+) is required as a cofactor.

The protein localises to the cytoplasm. The enzyme catalyses 1-(5-phospho-beta-D-ribosyl)-5'-AMP + H2O = 1-(5-phospho-beta-D-ribosyl)-5-[(5-phospho-beta-D-ribosylamino)methylideneamino]imidazole-4-carboxamide. It functions in the pathway amino-acid biosynthesis; L-histidine biosynthesis; L-histidine from 5-phospho-alpha-D-ribose 1-diphosphate: step 3/9. Its function is as follows. Catalyzes the hydrolysis of the adenine ring of phosphoribosyl-AMP. This is Phosphoribosyl-AMP cyclohydrolase from Micrococcus luteus (strain ATCC 4698 / DSM 20030 / JCM 1464 / CCM 169 / CCUG 5858 / IAM 1056 / NBRC 3333 / NCIMB 9278 / NCTC 2665 / VKM Ac-2230) (Micrococcus lysodeikticus).